An 898-amino-acid polypeptide reads, in one-letter code: Interleukin enhancer-binding factor 3 (898 aa).

Positions 5 to 378 (RIFVNDDRHV…PMKRPMEEDG (374 aa)) constitute a DZF domain. Residues 52-85 (QEKGNSELSEAENMDTPPDDESKEGAGEQKAEHM) form a disordered region. The span at 60–73 (SEAENMDTPPDDES) shows a compositional bias: acidic residues. Thr67 carries the post-translational modification Phosphothreonine. The span at 74-85 (KEGAGEQKAEHM) shows a compositional bias: basic and acidic residues. Lys100 is modified (N6-acetyllysine). Phosphothreonine; by PKR is present on Thr188. Position 190 is a phosphoserine (Ser190). Lys297 participates in a covalent cross-link: Glycyl lysine isopeptide (Lys-Gly) (interchain with G-Cter in ubiquitin). At Thr315 the chain carries Phosphothreonine; by PKR. Lys348 participates in a covalent cross-link: Glycyl lysine isopeptide (Lys-Gly) (interchain with G-Cter in SUMO1). The segment at 363-402 (TTYAITPMKRPMEEDGEEKSPSKKKKKIQKKEEKADPPQA) is disordered. The Bipartite nuclear localization signal motif lies at 371–389 (KRPMEEDGEEKSPSKKKKK). Positions 372-383 (RPMEEDGEEKSP) are enriched in basic and acidic residues. A phosphoserine mark is found at Ser382 and Ser384. A Glycyl lysine isopeptide (Lys-Gly) (interchain with G-Cter in SUMO2) cross-link involves residue Lys396. Residues 398–467 (DPPQAMNALM…AVKVLQDMGL (70 aa)) form the DRBM 1 domain. Lys460 is subject to N6-acetyllysine. 2 disordered regions span residues 466–495 (GLPT…IVAP) and 505–524 (PSSV…LTKH). Over residues 472 to 481 (EGRDSSKGED) the composition is skewed to basic and acidic residues. Ser476, Ser477, Ser482, and Ser486 each carry phosphoserine. Residue Lys489 forms a Glycyl lysine isopeptide (Lys-Gly) (interchain with G-Cter in SUMO2) linkage. The 67-residue stretch at 524-590 (HGKNPVMELN…ALAALEKLFP (67 aa)) folds into the DRBM 2 domain. At Thr592 the chain carries Phosphothreonine. Residues 609 to 898 (RGGPKFAAKP…TEHSMNYQYR (290 aa)) form an interaction with PRMT1 region. 2 disordered regions span residues 631-661 (NEVP…GGAN) and 719-898 (QGDS…YQYR). Residues 644 to 661 (RGGNIRGRGRGRGFGGAN) show a composition bias toward gly residues. Composition is skewed to low complexity over residues 745-769 (SYSS…SSYG), 783-794 (GSYSSYSNSYNS), and 802-812 (DYSYDSKFNYS). Ser794, Ser812, Ser814, and Ser818 each carry phosphoserine. Residues 813 to 822 (GSGGRSGGNS) are compositionally biased toward gly residues. The span at 823–834 (YGSSGSSSYNTG) shows a compositional bias: low complexity. A compositionally biased stretch (gly residues) spans 835–845 (SHGGYGTGSGG). A compositionally biased stretch (low complexity) spans 846–886 (SSSYQGKQGGYSSQSNYSSPGSSQSYSGPASSYQSSQGGYS).

As to quaternary structure, identified in a IGF2BP1-dependent mRNP granule complex containing untranslated mRNAs. Interacts with FUS and SMN. Interacts (via C-terminus) with PRMT1. Forms a complex with ILF2. Can also bind to PRKDC/XRCC7: this may stabilize the interaction of PRKDC/XRCC7 and the heterodimeric complex of XRCC6/KU70 and XRCC5/KU80. Forms a heteromeric complex with ZNF346 and ILF3. Found in a nuclear export complex with XPO5, ILF3, Ran and double-stranded RNA or double-stranded minihelix VA1 RNA. Found in a nuclear export complex with XPO5, RAN, ILF3, ZNF346 and double-stranded RNA. Interacts with XPO5 and ZNF346. Forms a complex with ILF2, YLPM1, KHDRBS1, RBMX, NCOA5 and PPP1CA. Interacts with AGO1 and AGO2. Interacts with DHX36; this interaction occurs in a RNA-dependent manner. Interacts with ELAVL1; this interaction occurs in a RNA-dependent manner. Interacts with HAVCR2; this interaction promotes ILF3 ubiquitination and subsequent degradation. In terms of processing, phosphorylated at Thr-188 and Thr-315 by PKR in response to RNA viruses. This phosphorylation results in the dissociation of ILF2 from the ILF2-ILF3 complex resulting in a cytoplasmic sequestration of ILF3 where it can bind to viral RNAs and impede viral replication. Methylated by protein arginine N-methyltransferase 1. In terms of tissue distribution, ubiquitous. Expressed at high levels in the thymus, testis, ovary and at lower levelss in the spleen.

The protein localises to the nucleus. Its subcellular location is the nucleolus. It is found in the cytoplasm. In terms of biological role, RNA-binding protein that plays an essential role in the biogenesis of circular RNAs (circRNAs) which are produced by back-splicing circularization of pre-mRNAs. Within the nucleus, promotes circRNAs processing by stabilizing the regulatory elements residing in the flanking introns of the circularized exons. Plays thereby a role in the back-splicing of a subset of circRNAs. As a consequence, participates in a wide range of transcriptional and post-transcriptional processes. Binds to poly-U elements and AU-rich elements (AREs) in the 3'-UTR of target mRNAs. Upon viral infection, ILF3 accumulates in the cytoplasm and participates in the innate antiviral response. Mechanistically, ILF3 becomes phosphorylated and activated by the double-stranded RNA-activated protein kinase/PKR which releases ILF3 from cellular mature circRNAs. In turn, unbound ILF3 molecules are able to interact with and thus inhibit viral mRNAs. This Mus musculus (Mouse) protein is Interleukin enhancer-binding factor 3 (Ilf3).